Consider the following 313-residue polypeptide: Olfactory receptor 4Q3 (313 aa).

At 1 to 25 (MKKEQDSNVTEFVLLGLSSSWELQL) the chain is on the extracellular side. N-linked (GlcNAc...) asparagine glycosylation is present at Asn-8. A helical transmembrane segment spans residues 26 to 49 (FLFLLFLFFYIAIVLGNLLIVVTV). The Cytoplasmic segment spans residues 50–58 (QAHAHLLQS). A helical membrane pass occupies residues 59 to 80 (PMYYFLGHLSFIDLCLSCVTVP). The Extracellular portion of the chain corresponds to 81–101 (KMLGDFLQQGKSISFSGCLAQ). A disulfide bridge links Cys-98 with Cys-190. A helical transmembrane segment spans residues 102–121 (IYFLHFLGASEMFLLTVMAY). Topologically, residues 122–140 (DRYVAICNPLRYLTVMNPQ) are cytoplasmic. Residues 141-159 (LCLWLVLACWCGGFIHSIM) traverse the membrane as a helical segment. Topologically, residues 160-196 (QVILVIQLPFCGPNELDNFYCDVPQVIKLACMDTYVV) are extracellular. Residues 197–220 (EVLVIANSGLLSLVCFLVLLFSYA) form a helical membrane-spanning segment. Residues 221 to 236 (IILITLRTHFCQGQNK) lie on the Cytoplasmic side of the membrane. The helical transmembrane segment at 237–259 (VFSTCASHLTVVSLIFVPCVFIY) threads the bilayer. Residues 260–270 (LRPFCSFSVDK) lie on the Extracellular side of the membrane. Residues 271–290 (IFSLFYTVITPMLNPLIYTL) traverse the membrane as a helical segment. At 291 to 313 (RNTDMKTAMKKLRIKPCGIPLPC) the chain is on the cytoplasmic side.

Belongs to the G-protein coupled receptor 1 family.

It localises to the cell membrane. Its function is as follows. Odorant receptor. The sequence is that of Olfactory receptor 4Q3 (OR4Q3) from Homo sapiens (Human).